The following is a 989-amino-acid chain: Bifunctional glutamine synthetase adenylyltransferase/adenylyl-removing enzyme (989 aa).

Positions 1 to 473 are adenylyl removase; it reads MRGPLEPDSA…HYANLFEDVA (473 aa). The interval 479-989 is adenylyl transferase; it reads DADLMFPPDE…FERILETAAE (511 aa).

This sequence belongs to the GlnE family. The cofactor is Mg(2+).

The enzyme catalyses [glutamine synthetase]-O(4)-(5'-adenylyl)-L-tyrosine + phosphate = [glutamine synthetase]-L-tyrosine + ADP. The catalysed reaction is [glutamine synthetase]-L-tyrosine + ATP = [glutamine synthetase]-O(4)-(5'-adenylyl)-L-tyrosine + diphosphate. Its function is as follows. Involved in the regulation of glutamine synthetase GlnA, a key enzyme in the process to assimilate ammonia. When cellular nitrogen levels are high, the C-terminal adenylyl transferase (AT) inactivates GlnA by covalent transfer of an adenylyl group from ATP to specific tyrosine residue of GlnA, thus reducing its activity. Conversely, when nitrogen levels are low, the N-terminal adenylyl removase (AR) activates GlnA by removing the adenylyl group by phosphorolysis, increasing its activity. The regulatory region of GlnE binds the signal transduction protein PII (GlnB) which indicates the nitrogen status of the cell. The polypeptide is Bifunctional glutamine synthetase adenylyltransferase/adenylyl-removing enzyme (Xanthobacter autotrophicus (strain ATCC BAA-1158 / Py2)).